The primary structure comprises 614 residues: Zinc finger and SCAN domain-containing protein 2 (614 aa).

2 disordered regions span residues 1–26 and 43–76; these read MMAA…EDRQ and EAVL…PQGA. One can recognise an SCAN box domain in the interval 59-132; sequence SAGKGGPQEE…ALVEDLTQTL (74 aa). C2H2-type zinc fingers lie at residues 222–244, 250–272, 278–300, 306–328, 334–356, 362–384, 390–412, 418–440, 446–468, 474–496, 502–524, 530–552, 558–580, and 586–608; these read YECP…ERTH, YKCD…QTTH, YKCR…QRIH, FQCA…QRTH, YSCP…QGIH, YECK…QRIH, YKCT…RRTH, YQCS…RRTH, YKCG…QGMH, YECL…QRIH, YKCS…QRTH, YKCL…QRAH, YRCP…QRIH, and YKCP…QRTH.

It belongs to the krueppel C2H2-type zinc-finger protein family.

The protein localises to the nucleus. In terms of biological role, may be involved in transcriptional regulation during the post-meiotic stages of spermatogenesis. The sequence is that of Zinc finger and SCAN domain-containing protein 2 (ZSCAN2) from Homo sapiens (Human).